The following is a 103-amino-acid chain: Large ribosomal subunit protein bL21 (103 aa).

The protein belongs to the bacterial ribosomal protein bL21 family. Part of the 50S ribosomal subunit. Contacts protein L20.

In terms of biological role, this protein binds to 23S rRNA in the presence of protein L20. This chain is Large ribosomal subunit protein bL21, found in Maridesulfovibrio salexigens (strain ATCC 14822 / DSM 2638 / NCIMB 8403 / VKM B-1763) (Desulfovibrio salexigens).